Consider the following 549-residue polypeptide: Nectin-3 (549 aa).

A signal peptide spans 1-57 (MARTPGPAPLCPGGGKAQLSSAFPPAAGLLLPAPTPPPLLLLLIPLLLFSRLCGALA). The region spanning 58–165 (GSIIVEPHVT…GNAQSSTTVT (108 aa)) is the Ig-like V-type domain. Residues 58–404 (GSIIVEPHVT…ATLKDDTIGT (347 aa)) lie on the Extracellular side of the membrane. N-linked (GlcNAc...) asparagine glycosylation is found at Asn-73, Asn-83, Asn-125, Asn-186, Asn-222, and Asn-331. Cys-78 and Cys-148 form a disulfide bridge. 2 Ig-like C2-type domains span residues 170-258 (PTVS…KDIR) and 269-354 (PEVS…KVIY). Cystine bridges form between Cys-193–Cys-246 and Cys-291–Cys-338. Residues 405 to 425 (IIASVVGGALFLVLVSILAGV) form a helical membrane-spanning segment. Over 426 to 549 (FCYRRRRTFR…SVISRREWYV (124 aa)) the chain is Cytoplasmic.

The protein belongs to the nectin family. As to quaternary structure, cis- and trans-homodimer. Can form trans-heterodimers with NECTIN1, NECTIN2, PVR, IGSF4B/Necl-1 and with IGSF4. Interaction between NECTIN1 and NECTIN3 on the pre- and postsynaptic sites, respectively, initiates the formation of puncta adherentia junctions between axons and dendrites. Interacts (via Cytoplasmic domain) with AFDN, providing a connection with the actin cytoskeleton. Binds with low affinity to TIGIT. Ubiquitous with high expression in testes. Localized in spermatids at Sertoli-spermatid junctions. Expressed in ovarian granulosa cells, but only faintly expressed after ovulation.

The protein resides in the cell membrane. The protein localises to the postsynaptic cell membrane. It is found in the cell junction. It localises to the adherens junction. In terms of biological role, cell adhesion molecule that promotes cell-cell adhesion through heterophilic trans-interactions with nectins-like or other nectins, such as trans-interaction with NECTIN2 at Sertoli-spermatid junctions. Trans-interaction with PVR induces activation of CDC42 and RAC small G proteins through common signaling molecules such as SRC and RAP1. Induces endocytosis-mediated down-regulation of PVR from the cell surface, resulting in reduction of cell movement and proliferation. Involved in axon guidance by promoting contacts between the commissural axons and the floor plate cells. Also involved in the formation of cell-cell junctions, including adherens junctions and synapses. Promotes formation of checkerboard-like cellular pattern of hair cells and supporting cells in the auditory epithelium via heterophilic interaction with NECTIN1: NECTIN1 is present in the membrane of hair cells and associates with NECTIN3 on supporting cells, thereby mediating heterotypic adhesion between these two cell types. Plays a role in the morphology of the ciliary body. The polypeptide is Nectin-3 (Mus musculus (Mouse)).